The primary structure comprises 652 residues: MANCEGTDGDGSGCNGWFLVQAIVDKQTGDTVSEDEDENATDTGSDLADFIDDTTDICVQAERETAQVLYNMQEAQRDAQSVRALKRKYGGSNLNKSPCAKPPGVHREQRVTLQELPVNICNKQARTNVYSVPDSGYGNMEVETAEVEVTVVNNTNGEEEGENGGENGGSIREECSSVDSAIDSENQDPQSPTAQLKTVLQANNQKAILLSQFKHTYGLAFNDLVRTFKSDKTICTDWVAAICGVNPTIAEGFKTLIQPYALYTHIQCLDTKYGVYILLLIRYKCGKNRITVGKGLSKLLHVPESCMLIEPPKLRSPVAALYWYRTGMSNISEVSGTTPEWIQRLTVIQHGIDDSVFDLSDMVQWAFDNDVTEDSDIAYGYALLADSNSNAAAFLKSNCQAKYVRDCATMCRHYKRAQKKQMTMAQWIRFRCDKCDDGGDWRPIVQFLRYQGVEFITFLCAFKEFLKGTPKKNCIVIQGPPNTGKSYFCMSLMHFLQGTVISYVNSTSHFWLEPLADAKVAMLDDATGTCWSYFDTYMRNALDGNPISLDRKHRHLIQIKCPPILITSNTNPVEENRWPYLTSRLTVFTFPNAFPFDQNRNPVYTINNKNWKSFFQKTWCKLDLQQDEDEGDNDGNTIPTFKCVTGENTRTL.

Positions 86–88 match the Nuclear localization signal motif; it reads KRK. A Phosphoserine; by host modification is found at Ser-92. Residues 153 to 173 are disordered; it reads NNTNGEEEGENGGENGGSIRE. A DNA-binding region region spans residues 188–354; it reads DPQSPTAQLK…LTVIQHGIDD (167 aa). Residues 453–603 enclose the SF3 helicase domain; it reads VEFITFLCAF…FPFDQNRNPV (151 aa). 479–486 is a binding site for ATP; that stretch reads GPPNTGKS. A Glycyl lysine isopeptide (Lys-Gly) (interchain with G-Cter in SUMO) cross-link involves residue Lys-560.

It belongs to the papillomaviridae E1 protein family. In terms of assembly, can form hexamers. Interacts with E2 protein; this interaction increases E1 DNA binding specificity. Interacts with host DNA polymerase subunit POLA2. Interacts with host single stranded DNA-binding protein RPA1. Interacts with host TOP1; this interaction stimulates the enzymatic activity of TOP1. Post-translationally, phosphorylated. In terms of processing, sumoylated.

The protein resides in the host nucleus. The enzyme catalyses Couples ATP hydrolysis with the unwinding of duplex DNA by translocating in the 3'-5' direction.. It catalyses the reaction ATP + H2O = ADP + phosphate + H(+). Its function is as follows. ATP-dependent DNA 3'-5' helicase required for initiation of viral DNA replication. It forms a complex with the viral E2 protein. The E1-E2 complex binds to the replication origin which contains binding sites for both proteins. During the initial step, a dimer of E1 interacts with a dimer of protein E2 leading to a complex that binds the viral origin of replication with high specificity. Then, a second dimer of E1 displaces the E2 dimer in an ATP-dependent manner to form the E1 tetramer. Following this, two E1 monomers are added to each half of the site, which results in the formation of two E1 trimers on the viral ori. Subsequently, two hexamers will be created. The double hexamer acts as a bi-directional helicase machinery and unwinds the viral DNA and then recruits the host DNA polymerase to start replication. In Human papillomavirus type 70, this protein is Replication protein E1.